The following is a 224-amino-acid chain: MAITDWPVDERPRERLLQKGAATLSDAELLAIFLRVGVVGKSAVDLAREMLLNFGSLRALLTASHHDFCVHKGLGDAKYALLQAVLEMGRRHLAEEWQRGDGLDSPLRVRQYLSATLRDRCREVFAVIFLDNRHRVLRFEEMFLGTIDGATVHIREVLKRALELNAAALIVAHNHPSGVAEPSAADLSLTRRLDQAMQLLDLRLLDHFIVGDGEPLSLREQGGW.

The region spanning 102-224 is the MPN domain; the sequence is GLDSPLRVRQ…PLSLREQGGW (123 aa). Zn(2+) is bound by residues histidine 173, histidine 175, and aspartate 186. The JAMM motif signature appears at 173-186; sequence HNHPSGVAEPSAAD.

This sequence belongs to the UPF0758 family.

This is UPF0758 protein AFE_0358 from Acidithiobacillus ferrooxidans (strain ATCC 23270 / DSM 14882 / CIP 104768 / NCIMB 8455) (Ferrobacillus ferrooxidans (strain ATCC 23270)).